The primary structure comprises 1850 residues: Chitin synthase V (1850 aa).

The disordered stretch occupies residues 1–27; sequence MASTLPPLGGGNGGPHTQHSLPSLPAH. In terms of domain architecture, Myosin motor spans 1–779; it reads MASTLPPLGG…EIAGLVDGSA (779 aa). 105-112 contacts ATP; it reads GESGSGKS. N-linked (GlcNAc...) asparagine glycans are attached at residues Asn-245, Asn-290, Asn-427, Asn-481, and Asn-558. Residues 289-309 are disordered; it reads NNTSATGDDSGGFSHEGGQTS. The disordered stretch occupies residues 593–647; sequence SKPMRAPSVMSRKGGRGRGIASQRRQQESNLFDSGNTHAESRSPKGGNKGGIDQG. Residues 620–630 show a composition bias toward polar residues; sequence ESNLFDSGNTH. The tract at residues 656 to 680 is actin-binding; the sequence is LDNVQKAVTDPGTNAYFVFCLKPND. 2 helical membrane passes run 884-904 and 923-943; these read WVFTVYFLTWFIPDFLIRWIG and MLIWFMCLVAAFFIVVFPMLI. Residues 947 to 1006 enclose the Cytochrome b5 heme-binding domain; sequence QNVFSAAELSSHNGKDGNSAYVSIRGHVIDLGSFADRHYPSFVSRKTMLNYAGMDVSSLF. 3 N-linked (GlcNAc...) asparagine glycosylation sites follow: Asn-1033, Asn-1058, and Asn-1186. The helical transmembrane segment at 1196-1216 threads the bilayer; sequence LVLAVSILLVSVIAFKFFAAL. N-linked (GlcNAc...) asparagine glycosylation is found at Asn-1453 and Asn-1559. The next 4 helical transmembrane spans lie at 1568-1588, 1590-1610, 1617-1637, and 1644-1664; these read LIPMAQLCGFCCFSMRFVVFI, LLSTVVQPVTIAYIVYLIVLV, VPITAFILLGAIYGLQAIIFI, and MVGWMILYVMAVPVFSFGLPL. An N-linked (GlcNAc...) asparagine glycan is attached at Asn-1767. Residues 1800-1850 enclose the DEK-C domain; that stretch reads LPSDDALLAEIRDILKTADLMTVTKKGIKQELERRFDVPLDAKRAYINSGK.

The protein in the N-terminal section; belongs to the TRAFAC class myosin-kinesin ATPase superfamily. Myosin family. This sequence in the C-terminal section; belongs to the chitin synthase family. Class V subfamily. In terms of tissue distribution, expressed in conidia and during appressorium formation.

Its subcellular location is the cell membrane. The protein resides in the cell septum. It is found in the cell tip. It carries out the reaction [(1-&gt;4)-N-acetyl-beta-D-glucosaminyl](n) + UDP-N-acetyl-alpha-D-glucosamine = [(1-&gt;4)-N-acetyl-beta-D-glucosaminyl](n+1) + UDP + H(+). In terms of biological role, polymerizes chitin, a structural polymer of the cell wall and septum, by transferring the sugar moiety of UDP-GlcNAc to the non-reducing end of the growing chitin polymer. Contributes to the production of conidia and the ability of fungal conidia to germinate. Involved in the fungal cell wall integrity and the ability of conidia to withstand biophysical pressure. Required for appressorium formation and evasion of insect cellular and/or humoral defenses, promoting the fungal dimorphic transition to the production of hyphal bodies that occurs within hosts, and ultimately to virulence. This is Chitin synthase V from Metarhizium acridum (strain CQMa 102).